Consider the following 951-residue polypeptide: Serine/threonine-protein phosphatase 4 regulatory subunit 1 (951 aa).

HEAT repeat units follow at residues 26 to 63 (ESDV…VFNR), 65 to 81 (MVAR…CDDE), 82 to 119 (RDCI…FCQE), 127 to 164 (AFSK…QELI), 168 to 206 (DVET…MVGK), 208 to 246 (ITER…VVGQ), 248 to 285 (ATEE…ATCQ), and 287 to 324 (IRRT…TFAN). 3 disordered regions span residues 325 to 377 (PSSS…HSSA), 411 to 451 (SESP…PLDQ), and 474 to 499 (QQDP…GPPN). Residues 332-365 (FKDESKSSEDSSAEDKDRMRDNDVVEEEHRRPED) are compositionally biased toward basic and acidic residues. Composition is skewed to polar residues over residues 411-421 (SESPQEAASND) and 430-445 (NSKS…SSPE). Over residues 474 to 487 (QQDPEERLSPERTG) the composition is skewed to basic and acidic residues. The HEAT 9 repeat unit spans residues 506–543 (KELEEMIENLEPHMDDPDVKAQVDVLSAALRASSLDAH). Residues 590 to 612 (DYVHGGADVSPGDGFSPDEDRRP) are disordered. HEAT repeat units lie at residues 699–735 (LTAA…LLHI), 800–838 (WISY…RCPK), and 862–899 (QFAV…EKEY). S936 bears the Phosphoserine mark.

In terms of assembly, serine/threonine-protein phosphatase 4 (PP4) occurs in different assemblies of the catalytic and one or more regulatory subunits. Component of the PP4 complex PPP4C-PPP4R1. Interacts with HDAC3.

Functionally, regulatory subunit of serine/threonine-protein phosphatase 4. May play a role in regulation of cell division in renal glomeruli. The PPP4C-PPP4R1 PP4 complex may play a role in dephosphorylation and regulation of HDAC3. Plays a role in the inhibition of TNF-induced NF-kappa-B activation by regulating the dephosphorylation of TRAF2. The sequence is that of Serine/threonine-protein phosphatase 4 regulatory subunit 1 (Ppp4r1) from Mus musculus (Mouse).